The sequence spans 96 residues: Co-chaperonin GroES (96 aa).

The interval 26 to 48 (LLPGSAQEKPSQGEVLATGNGQI) is disordered.

It belongs to the GroES chaperonin family. In terms of assembly, heptamer of 7 subunits arranged in a ring. Interacts with the chaperonin GroEL.

It is found in the cytoplasm. Together with the chaperonin GroEL, plays an essential role in assisting protein folding. The GroEL-GroES system forms a nano-cage that allows encapsulation of the non-native substrate proteins and provides a physical environment optimized to promote and accelerate protein folding. GroES binds to the apical surface of the GroEL ring, thereby capping the opening of the GroEL channel. The polypeptide is Co-chaperonin GroES (Psychrobacter arcticus (strain DSM 17307 / VKM B-2377 / 273-4)).